The primary structure comprises 338 residues: UDP-3-O-acylglucosamine N-acyltransferase (338 aa).

H251 (proton acceptor) is an active-site residue.

This sequence belongs to the transferase hexapeptide repeat family. LpxD subfamily. As to quaternary structure, homotrimer.

The enzyme catalyses a UDP-3-O-[(3R)-3-hydroxyacyl]-alpha-D-glucosamine + a (3R)-hydroxyacyl-[ACP] = a UDP-2-N,3-O-bis[(3R)-3-hydroxyacyl]-alpha-D-glucosamine + holo-[ACP] + H(+). The protein operates within bacterial outer membrane biogenesis; LPS lipid A biosynthesis. Its function is as follows. Catalyzes the N-acylation of UDP-3-O-acylglucosamine using 3-hydroxyacyl-ACP as the acyl donor. Is involved in the biosynthesis of lipid A, a phosphorylated glycolipid that anchors the lipopolysaccharide to the outer membrane of the cell. This chain is UDP-3-O-acylglucosamine N-acyltransferase, found in Psychrobacter arcticus (strain DSM 17307 / VKM B-2377 / 273-4).